The sequence spans 528 residues: G protein-coupled receptor 161 (528 aa).

The Extracellular segment spans residues 1-30 (MSLNSSLGHRKELSNLTEGASDQGGSGVTE). Residues Asn4 and Asn15 are each glycosylated (N-linked (GlcNAc...) asparagine). Residues 31–51 (FVAIVIITVFVCLGNLVIVIT) form a helical membrane-spanning segment. The Cytoplasmic portion of the chain corresponds to 52 to 64 (LYRKSYLLTLSNK). The helical transmembrane segment at 65–85 (FVFSLTLSNFLLSVLVLPFVV) threads the bilayer. Over 86-101 (TSSIRREWIFGVVWCN) the chain is Extracellular. A disulfide bridge links Cys100 with Cys178. Asn101 carries an N-linked (GlcNAc...) asparagine glycan. Residues 102-122 (FSALLYLLISSASMLTLGIIA) traverse the membrane as a helical segment. Residues 123–143 (VDRYYAVLYPMAYPMKITGNR) are Cytoplasmic-facing. Residues 144-164 (AVMVLAYIWLHSLIGCLPPLF) traverse the membrane as a helical segment. Topologically, residues 165 to 190 (GWSSVEFDEFKWMCVAAWHREPGYTA) are extracellular. A helical transmembrane segment spans residues 191 to 211 (FWQIWCALLPFLVMLVCYGFI). At 212-269 (FRVARVKARKVHCGAVVTVEVGVQRTGRKNSSTSTSSSGSRKSAFQGVVYSANQCKAL) the chain is on the cytoplasmic side. A helical transmembrane segment spans residues 270–290 (VTILVVIGAFMVTWGPYMVVI). The Extracellular portion of the chain corresponds to 291 to 306 (TSEALWGKNCVSPTLE). The helical transmembrane segment at 307–327 (TWATWLSFTSAICHPLIYGLW) threads the bilayer. The Cytoplasmic portion of the chain corresponds to 328–528 (NKTVRKELLG…EGDVLATEQR (201 aa)).

Belongs to the G-protein coupled receptor 1 family.

The protein localises to the cell projection. Its subcellular location is the cilium membrane. The protein resides in the cell membrane. In terms of biological role, key negative regulator of Shh signaling, which promotes the processing of GLI3 into GLI3R during neural tube development. Recruited by TULP3 and the IFT-A complex to primary cilia and acts as a regulator of the PKA-dependent basal repression machinery in Shh signaling by increasing cAMP levels, leading to promote the PKA-dependent processing of GLI3 into GLI3R and repress the Shh signaling. In presence of SHH, it is removed from primary cilia and is internalized into recycling endosomes, preventing its activity and allowing activation of the Shh signaling. Its ligand is unknown. The sequence is that of G protein-coupled receptor 161 (GPR161) from Bos taurus (Bovine).